A 302-amino-acid polypeptide reads, in one-letter code: Ribonuclease HII (302 aa).

The RNase H type-2 domain occupies 53–297 (EFEIGVDEVG…VQQAIEGTLA (245 aa)). A divalent metal cation contacts are provided by Asp-59, Glu-60, and Asp-163.

This sequence belongs to the RNase HII family. The cofactor is Mn(2+). Mg(2+) is required as a cofactor.

The protein resides in the cytoplasm. The catalysed reaction is Endonucleolytic cleavage to 5'-phosphomonoester.. Its function is as follows. Endonuclease that specifically degrades the RNA of RNA-DNA hybrids. The protein is Ribonuclease HII of Psychrobacter sp. (strain PRwf-1).